The primary structure comprises 118 residues: Small ribosomal subunit protein uS19c (118 aa).

The disordered stretch occupies residues 92-118 (KKSSKKVTKNKKSIKKNIKTTSKKFKK).

Belongs to the universal ribosomal protein uS19 family.

It localises to the plastid. In terms of biological role, protein S19 forms a complex with S13 that binds strongly to the 16S ribosomal RNA. The sequence is that of Small ribosomal subunit protein uS19c (rps19) from Euglena longa (Euglenophycean alga).